The following is a 614-amino-acid chain: MQANGAAAAAAGEEPAGSGCLSAHNGESSEPAHSNGVLSSNNGLSGTGSTGPTEQPGGRKKKRLSQADEDVIRLIGQHLHGLGLNQTVDLLMQESGCRLEHPSATKFRNHVMEGEWDKAENDLNELKSLVHSPHAVAACRPSSGGSGSEHSPTSCPTADVIRRMKFLLLQQKYLEYLEDGKVLEALQVLRCELTPLKYNTERIHVLSGYLMCSHADDLRAKAEWEGKGTASRSKLLDKLQTYLPPSVMLPPRRLQTLLRQAVELQRDRCLYHNTKLDNNLDSVSLLIDHVCSRKQFPCFTQQVLTEHCNEVWFCKFSNDGTKLATGSKDTTVIIWQVDPDTHQLKLLKTLEGHAYGVSYLAWSPDDNYLIACGPDDCSELWLWNVQTGELRTKMSQSHEDSLTSVAWNPDGKRFVTGGQRGQFYQCDLDGNLLDSWEGVRVQCLWCLSDGKTVLASDTHQRIRGYNFEDLTDRNIVQEDHPIMSFTISRNGRLALLNVATQGVHLWDLQDRVLVRKYQGVTQGFYTIHSCFGGHNEDFIASGSEDHKVYVWHKRSELPIAELTGHTRTVNCVSWNPQIPSLMASASDDGTVRIWGPAPYVDNQEFEEECSSMNS.

Low complexity-rich tracts occupy residues 1–19 and 34–44; these read MQAN…AGSG and SNGVLSSNNGL. The tract at residues 1–65 is disordered; the sequence is MQANGAAAAA…PGGRKKKRLS (65 aa). One can recognise a LisH domain in the interval 67-99; it reads ADEDVIRLIGQHLHGLGLNQTVDLLMQESGCRL. Positions 100–184 constitute a CTLH domain; the sequence is EHPSATKFRN…EYLEDGKVLE (85 aa). WD repeat units lie at residues 306–345, 352–391, 397–437, 477–516, 519–561, and 564–604; these read EHCN…HQLK, GHAY…GELR, SHED…DSWE, QEDH…LVRK, GVTQ…PIAE, and GHTR…DNQE.

In terms of assembly, forms homooligomers. Identified in the CTLH complex that contains at least MAEA, RMND5A (or alternatively its paralog RMND5B), GID8, WDR26, and RANBP9 and/or RANBP10. Interacts with DDB1-CUL4A/B E3 ligase complexes.

The protein resides in the cytoplasm. It is found in the nucleus. The protein localises to the mitochondrion. In terms of biological role, G-beta-like protein involved in cell signal transduction. Acts as a negative regulator in MAPK signaling pathway. Functions as a scaffolding protein to promote G beta:gamma-mediated PLCB2 plasma membrane translocation and subsequent activation in leukocytes. Core component of the CTLH E3 ubiquitin-protein ligase complex that mediates ubiquitination and subsequent proteasomal degradation of target proteins. Acts as a negative regulator of the canonical Wnt signaling pathway through preventing ubiquitination of beta-catenin CTNNB1 by the beta-catenin destruction complex, thus negatively regulating CTNNB1 degradation. Serves as a scaffold to coordinate PI3K/AKT pathway-driven cell growth and migration. Protects cells from oxidative stress-induced apoptosis via the down-regulation of AP-1 transcriptional activity as well as by inhibiting cytochrome c release from mitochondria. Also protects cells by promoting hypoxia-mediated autophagy and mitophagy. The protein is WD repeat-containing protein 26 (wdr26) of Xenopus tropicalis (Western clawed frog).